The chain runs to 228 residues: Protein LIAT1 (228 aa).

The disordered stretch occupies residues 1 to 108 (MAGRGGTGAA…RAEPRDKEEN (108 aa)). Positions 12–24 (YGEEGEEEEEEEA) are enriched in acidic residues. A lysine-rich domain region spans residues 49–71 (KRKVKKKKKKKKTKGSGKGDADK). A compositionally biased stretch (basic residues) spans 50–63 (RKVKKKKKKKKTKG). The segment covering 90-108 (LNPHKDHGLRAEPRDKEEN) has biased composition (basic and acidic residues). Residues 113–165 (PYSYSINHPCFAEIEDTLSSQINESLRWDGILTDPEAEKERIRIYKLNRRKRY) are interaction with ATE1. Residues 169–178 (ALKCFHSDPC) form repeat 1.

As to quaternary structure, self-associates (via Lys-rich domain); targets LIAT1 to the nucleolus. Interacts with ATE1; it is not a substrate of ATE1, the interaction takes place in the cytoplasm and seems to increase ATE1 arginyltransferase activity. Interacts with JMJD6 and MRPS14. In terms of processing, post-translationally modified by JMJD6 lysyl-hydroxylase activity at its Lys-rich domain, which inhibits its self-association and nucleolar localization. Highly expressed in spleen, thymus, liver and brown adipose tissue. Moderately expressed in liver, testis and lung.

Its subcellular location is the nucleus. It localises to the nucleolus. It is found in the cytoplasm. Its function is as follows. Participates in nucleolar liquid-liquid phase separation (LLPS) through its N-terminal intrinsically disordered region (IDR). May be involved in ATE1-mediated N-terminal arginylation. This Mus musculus (Mouse) protein is Protein LIAT1.